The primary structure comprises 407 residues: Serine/threonine transporter SstT (407 aa).

The next 9 helical transmembrane spans lie at 14-34, 48-68, 82-102, 141-161, 192-212, 218-238, 290-310, 316-336, and 363-383; these read GSLVLQILVGIIAGVILATVS, FVGALKAIAPILVFILVAASI, IVILYLFGTFSAAVTAVLMSF, AVITGNYIGILAWGVGLGLAL, IGIFGLVSSTFATTGFSAIAG, LVLLGAMAIMALIINPAIVFF, IPLGATINMGGAAITITILTL, MGIQVDILTAILLSVVAGVSA, and VAMQVVAVGFIIGVIQDSAET.

It belongs to the dicarboxylate/amino acid:cation symporter (DAACS) (TC 2.A.23) family.

Its subcellular location is the cell inner membrane. The enzyme catalyses L-serine(in) + Na(+)(in) = L-serine(out) + Na(+)(out). It catalyses the reaction L-threonine(in) + Na(+)(in) = L-threonine(out) + Na(+)(out). Functionally, involved in the import of serine and threonine into the cell, with the concomitant import of sodium (symport system). The protein is Serine/threonine transporter SstT of Shewanella pealeana (strain ATCC 700345 / ANG-SQ1).